The following is a 90-amino-acid chain: PqqA binding protein 2 (90 aa).

This sequence belongs to the PqqD family. Monomer. Interacts with PqqE.

It participates in cofactor biosynthesis; pyrroloquinoline quinone biosynthesis. Functions as a PqqA binding protein and presents PqqA to PqqE, in the pyrroloquinoline quinone (PQQ) biosynthetic pathway. This is PqqA binding protein 2 (pqqD2) from Pseudomonas putida (strain ATCC 47054 / DSM 6125 / CFBP 8728 / NCIMB 11950 / KT2440).